Reading from the N-terminus, the 277-residue chain is Basic leucine zipper transcriptional factor ATF-like 2 (277 aa).

3 disordered regions span residues 15–50 (LGESQKQLKKKQKNRVAAQRSRQKHTSKADALHQQH), 126–146 (FQTPGSSPRAQHLSPGPCSHE), and 191–256 (SFSK…QKSS). The region spanning 18–81 (SQKQLKKKQK…AGWGRTLHLH (64 aa)) is the bZIP domain. The interval 20 to 42 (KQLKKKQKNRVAAQRSRQKHTSK) is basic motif. The span at 41-50 (SKADALHQQH) shows a compositional bias: basic and acidic residues. The leucine-zipper stretch occupies residues 46 to 67 (LHQQHESLEKQNHALRKEIQAL). Composition is skewed to polar residues over residues 213–227 (RQEQPTSGRLASSDS) and 247–256 (GSSTHWQKSS).

It belongs to the bZIP family. Heterodimer; heterodimerizes with JUN family proteins.

The protein localises to the nucleus. Its function is as follows. AP-1 family transcription factor that controls the differentiation of lineage-specific cells in the immune system. Selectively suppresses CCN1 transcription and hence blocks the downstream cell proliferation signals produced by CCN1 and inhibits CCN1-induced anchorage-independent growth and invasion in several cancer types. Possibly acts by interfering with AP-1 binding to CCN1 promoter. Following infection, participates in the differentiation of CD8(+) thymic conventional dendritic cells in the immune system. Acts via the formation of a heterodimer with JUN family proteins that recognizes and binds DNA sequence 5'-TGA[CG]TCA-3' and regulates expression of target genes. The chain is Basic leucine zipper transcriptional factor ATF-like 2 (Batf2) from Mus musculus (Mouse).